A 147-amino-acid polypeptide reads, in one-letter code: Cyanate hydratase (147 aa).

Residues R88, E91, and S114 contribute to the active site.

It belongs to the cyanase family.

The catalysed reaction is cyanate + hydrogencarbonate + 3 H(+) = NH4(+) + 2 CO2. In terms of biological role, catalyzes the reaction of cyanate with bicarbonate to produce ammonia and carbon dioxide. The protein is Cyanate hydratase of Prochlorococcus marinus subsp. pastoris (strain CCMP1986 / NIES-2087 / MED4).